The chain runs to 968 residues: RNA polymerase-associated protein RapA (968 aa).

Positions 164–334 constitute a Helicase ATP-binding domain; that stretch reads DVGRRHAPRV…FARLRLLDPN (171 aa). 177–184 contributes to the ATP binding site; the sequence is DEVGLGKT. A DEAH box motif is present at residues 280–283; it reads DEAH. Residues 490 to 644 enclose the Helicase C-terminal domain; sequence RVEWLMGYLT…TCPTGRTVYD (155 aa).

The protein belongs to the SNF2/RAD54 helicase family. RapA subfamily. In terms of assembly, interacts with the RNAP. Has a higher affinity for the core RNAP than for the holoenzyme. Its ATPase activity is stimulated by binding to RNAP.

Functionally, transcription regulator that activates transcription by stimulating RNA polymerase (RNAP) recycling in case of stress conditions such as supercoiled DNA or high salt concentrations. Probably acts by releasing the RNAP, when it is trapped or immobilized on tightly supercoiled DNA. Does not activate transcription on linear DNA. Probably not involved in DNA repair. This Klebsiella pneumoniae (strain 342) protein is RNA polymerase-associated protein RapA.